The chain runs to 208 residues: Urease accessory protein UreG 1 (208 aa).

Position 14-21 (14-21 (GPVGSGKT)) interacts with GTP.

It belongs to the SIMIBI class G3E GTPase family. UreG subfamily. Homodimer. UreD, UreF and UreG form a complex that acts as a GTP-hydrolysis-dependent molecular chaperone, activating the urease apoprotein by helping to assemble the nickel containing metallocenter of UreC. The UreE protein probably delivers the nickel.

Its subcellular location is the cytoplasm. In terms of biological role, facilitates the functional incorporation of the urease nickel metallocenter. This process requires GTP hydrolysis, probably effectuated by UreG. The sequence is that of Urease accessory protein UreG 1 from Brucella ovis (strain ATCC 25840 / 63/290 / NCTC 10512).